We begin with the raw amino-acid sequence, 201 residues long: Peptide deformylase (201 aa).

2 residues coordinate Fe cation: cysteine 114 and histidine 156. Glutamate 157 is an active-site residue. A Fe cation-binding site is contributed by histidine 160.

This sequence belongs to the polypeptide deformylase family. It depends on Fe(2+) as a cofactor.

It carries out the reaction N-terminal N-formyl-L-methionyl-[peptide] + H2O = N-terminal L-methionyl-[peptide] + formate. In terms of biological role, removes the formyl group from the N-terminal Met of newly synthesized proteins. Requires at least a dipeptide for an efficient rate of reaction. N-terminal L-methionine is a prerequisite for activity but the enzyme has broad specificity at other positions. The polypeptide is Peptide deformylase (Tropheryma whipplei (strain TW08/27) (Whipple's bacillus)).